The sequence spans 360 residues: Photosystem II protein D1 (360 aa).

3 helical membrane passes run 29 to 46, 118 to 133, and 142 to 156; these read YIGWFGVLMIPTLLTATT, HFLLGVASYMGREWEL, and WIFVAFSAPVAAASA. A chlorophyll a-binding site is contributed by histidine 118. Tyrosine 126 contacts pheophytin a. Residues aspartate 170 and glutamate 189 each contribute to the [CaMn4O5] cluster site. Residues 197-218 traverse the membrane as a helical segment; sequence FHMAGVAGVFGGSLFSAMHGSL. Histidine 198 is a chlorophyll a binding site. Residues histidine 215 and 264–265 each bind a quinone; that span reads SF. Histidine 215 is a Fe cation binding site. Residue histidine 272 coordinates Fe cation. A helical transmembrane segment spans residues 274–288; sequence FLAAWPVVRIWLTAL. [CaMn4O5] cluster contacts are provided by histidine 332, glutamate 333, aspartate 342, and alanine 344. Residues 345–360 constitute a propeptide that is removed on maturation; sequence AGEVLPVAVSAPAVHA.

This sequence belongs to the reaction center PufL/M/PsbA/D family. As to quaternary structure, PSII is composed of 1 copy each of membrane proteins PsbA, PsbB, PsbC, PsbD, PsbE, PsbF, PsbH, PsbI, PsbJ, PsbK, PsbL, PsbM, PsbT, PsbX, PsbY, PsbZ, Psb30/Ycf12, at least 3 peripheral proteins of the oxygen-evolving complex and a large number of cofactors. It forms dimeric complexes. The cofactor is The D1/D2 heterodimer binds P680, chlorophylls that are the primary electron donor of PSII, and subsequent electron acceptors. It shares a non-heme iron and each subunit binds pheophytin, quinone, additional chlorophylls, carotenoids and lipids. D1 provides most of the ligands for the Mn4-Ca-O5 cluster of the oxygen-evolving complex (OEC). There is also a Cl(-1) ion associated with D1 and D2, which is required for oxygen evolution. The PSII complex binds additional chlorophylls, carotenoids and specific lipids.. In terms of processing, tyr-161 forms a radical intermediate that is referred to as redox-active TyrZ, YZ or Y-Z. Post-translationally, C-terminally processed by CTPA; processing is essential to allow assembly of the oxygen-evolving complex and thus photosynthetic growth.

The protein localises to the plastid. It is found in the chloroplast thylakoid membrane. The enzyme catalyses 2 a plastoquinone + 4 hnu + 2 H2O = 2 a plastoquinol + O2. Photosystem II (PSII) is a light-driven water:plastoquinone oxidoreductase that uses light energy to abstract electrons from H(2)O, generating O(2) and a proton gradient subsequently used for ATP formation. It consists of a core antenna complex that captures photons, and an electron transfer chain that converts photonic excitation into a charge separation. The D1/D2 (PsbA/PsbD) reaction center heterodimer binds P680, the primary electron donor of PSII as well as several subsequent electron acceptors. The polypeptide is Photosystem II protein D1 (Bumilleriopsis filiformis (Yellow-green alga)).